Consider the following 328-residue polypeptide: V-type sodium ATPase subunit C (328 aa).

The protein belongs to the V-ATPase V0D/AC39 subunit family.

Involved in ATP-driven sodium extrusion. The sequence is that of V-type sodium ATPase subunit C (ntpC) from Enterococcus hirae (strain ATCC 9790 / DSM 20160 / JCM 8729 / LMG 6399 / NBRC 3181 / NCIMB 6459 / NCDO 1258 / NCTC 12367 / WDCM 00089 / R).